A 163-amino-acid polypeptide reads, in one-letter code: Probable RNA-binding protein EIF1AD (163 aa).

Residues 18-96 form the S1-like domain; the sequence is MMEDDYELPT…VKAEISKILT (79 aa). Residues 106–163 form a disordered region; the sequence is AGIWPERFAKNPPQEAKAQNDDEDSDFEDDLTPNTNRPVQESDEEDEDTDTESSDEED. 2 stretches are compositionally biased toward acidic residues: residues 126–136 and 146–163; these read DDEDSDFEDDL and ESDE…DEED.

This sequence belongs to the EIF1AD family.

The sequence is that of Probable RNA-binding protein EIF1AD from Drosophila pseudoobscura pseudoobscura (Fruit fly).